We begin with the raw amino-acid sequence, 460 residues long: Argininosuccinate lyase (460 aa).

This sequence belongs to the lyase 1 family. Argininosuccinate lyase subfamily.

Its subcellular location is the cytoplasm. The enzyme catalyses 2-(N(omega)-L-arginino)succinate = fumarate + L-arginine. The protein operates within amino-acid biosynthesis; L-arginine biosynthesis; L-arginine from L-ornithine and carbamoyl phosphate: step 3/3. This Campylobacter hominis (strain ATCC BAA-381 / DSM 21671 / CCUG 45161 / LMG 19568 / NCTC 13146 / CH001A) protein is Argininosuccinate lyase.